Consider the following 601-residue polypeptide: ATP-dependent lipid A-core flippase (601 aa).

The 301-residue stretch at 28-328 (LLSVVGLIVY…LTRVNAEFQR (301 aa)) folds into the ABC transmembrane type-1 domain. 6 consecutive transmembrane segments (helical) span residues 32 to 52 (VGLI…GPFI), 81 to 101 (VLLM…FANF), 160 to 180 (ALIS…LMFY), 183 to 203 (WKLS…ITIV), 267 to 287 (AVSQ…VLYA), and 296 to 316 (DLTA…LQPI). The 238-residue stretch at 360 to 597 (LRFDNVSFSY…GGMYAKLYQM (238 aa)) folds into the ABC transporter domain. An ATP-binding site is contributed by 394–401 (GRSGSGKS).

Belongs to the ABC transporter superfamily. Lipid exporter (TC 3.A.1.106) family. Homodimer.

It is found in the cell inner membrane. It catalyses the reaction ATP + H2O + lipid A-core oligosaccharideSide 1 = ADP + phosphate + lipid A-core oligosaccharideSide 2.. Functionally, involved in lipopolysaccharide (LPS) biosynthesis. Translocates lipid A-core from the inner to the outer leaflet of the inner membrane. Transmembrane domains (TMD) form a pore in the inner membrane and the ATP-binding domain (NBD) is responsible for energy generation. This chain is ATP-dependent lipid A-core flippase, found in Shewanella oneidensis (strain ATCC 700550 / JCM 31522 / CIP 106686 / LMG 19005 / NCIMB 14063 / MR-1).